The chain runs to 51 residues: Insulin (51 aa).

Disulfide bonds link Cys-7-Cys-37, Cys-19-Cys-50, and Cys-36-Cys-41.

The protein belongs to the insulin family. As to quaternary structure, heterodimer of a B chain and an A chain linked by two disulfide bonds.

It localises to the secreted. Functionally, insulin decreases blood glucose concentration. It increases cell permeability to monosaccharides, amino acids and fatty acids. It accelerates glycolysis, the pentose phosphate cycle, and glycogen synthesis in liver. In Anser anser anser (Western greylag goose), this protein is Insulin (INS).